Consider the following 394-residue polypeptide: Keratin, type I cuticular Ha4 (394 aa).

The segment at 1–56 (MSYSCCLPSLGCRTSCSSRPCVPPSCHGYTLPGACNIPANVSNCNWFCEGSFNGSE) is head. Positions 56-367 (EKETMQFLND…SLLESEDCKL (312 aa)) constitute an IF rod domain. Residues 57–91 (KETMQFLNDRLASYLEKVRQLERDNAELEKLIQER) form a coil 1A region. The tract at residues 92–102 (SQQQEPLLCPS) is linker 1. Positions 103–203 (YQSYFKTIEE…HEEEVNTLRS (101 aa)) are coil 1B. A linker 12 region spans residues 204-219 (QLGDRLNVEVDTAPTV). Residues 220 to 363 (DLNQVLNETR…NTYRSLLESE (144 aa)) form a coil 2 region. A tail region spans residues 364 to 394 (DCKLPCNPCATTNASGNSCGPCGTSQKGCCN).

Belongs to the intermediate filament family. Expressed in the hair follicles.

In Homo sapiens (Human), this protein is Keratin, type I cuticular Ha4 (KRT34).